Consider the following 399-residue polypeptide: Glutathione-independent formaldehyde dehydrogenase (399 aa).

A Zn(2+)-binding site is contributed by Cys-47. NAD(+)-binding residues include Gly-48, Ser-49, and His-52. Zn(2+)-binding residues include His-68, Cys-98, Cys-101, Cys-104, Cys-112, and Asp-170. Residues Val-198, Asp-218, Arg-223, Val-263, Arg-268, His-270, Pro-300, Leu-302, Gly-337, and Thr-339 each coordinate NAD(+).

This sequence belongs to the zinc-containing alcohol dehydrogenase family. Homotetramer. Zn(2+) serves as cofactor.

The catalysed reaction is formaldehyde + NAD(+) + H2O = formate + NADH + 2 H(+). It carries out the reaction acetaldehyde + NAD(+) + H2O = acetate + NADH + 2 H(+). It catalyses the reaction 2 formaldehyde + H2O = methanol + formate + H(+). Inactivated by bipyridine and p-chloromercuribenzoate. Its function is as follows. Dehydrogenase that catalyzes the NAD(+)-dependent oxidation of formaldehyde and acetaldehyde, and, to a lesser extent, long-chain alcohols, but is inactive against propionaldehyde, butyraldehyde, methanol and ethanol. Can also catalyze the dismutation of a wide range of aldehydes such as formaldehyde. This chain is Glutathione-independent formaldehyde dehydrogenase, found in Pseudomonas putida (Arthrobacter siderocapsulatus).